The chain runs to 319 residues: ATP-dependent 6-phosphofructokinase (319 aa).

Residue Gly11 coordinates ATP. 21-25 (RAVTR) provides a ligand contact to ADP. ATP is bound by residues 72 to 73 (RY) and 102 to 105 (GDGS). Asp103 contacts Mg(2+). A substrate-binding site is contributed by 125 to 127 (TID). Asp127 acts as the Proton acceptor in catalysis. Position 154 (Arg154) interacts with ADP. Substrate is bound by residues Arg162 and 169–171 (MGR). Residues 185-187 (GAD) and 213-215 (KDH) contribute to the ADP site. Residues Glu222, Arg243, and 249–252 (HMQR) each bind substrate.

The protein belongs to the phosphofructokinase type A (PFKA) family. ATP-dependent PFK group I subfamily. Prokaryotic clade 'B1' sub-subfamily. As to quaternary structure, homotetramer. It depends on Mg(2+) as a cofactor.

It is found in the cytoplasm. It carries out the reaction beta-D-fructose 6-phosphate + ATP = beta-D-fructose 1,6-bisphosphate + ADP + H(+). The protein operates within carbohydrate degradation; glycolysis; D-glyceraldehyde 3-phosphate and glycerone phosphate from D-glucose: step 3/4. Its activity is regulated as follows. Allosterically activated by ADP and other diphosphonucleosides, and allosterically inhibited by phosphoenolpyruvate. The binding affinities for these effectors are decreased however, and therefore the allosteric effect becomes apparent only at high effector concentrations. Its function is as follows. Catalyzes the phosphorylation of D-fructose 6-phosphate to fructose 1,6-bisphosphate by ATP, the first committing step of glycolysis. The chain is ATP-dependent 6-phosphofructokinase from Lactobacillus delbrueckii subsp. bulgaricus.